The chain runs to 97 residues: Protein GLUTAMINE DUMPER 7 (97 aa).

The Extracellular segment spans residues 1-25 (MSLHRDSMVPVNSRLENMDSPILSK). A helical transmembrane segment spans residues 26-46 (ICAWGVMLGLFALSLFAMAYA). At 47–97 (CYHKQTSNSCIEEKQGKKQVLKPLDMEPKIVVIMAGNENPTFFAKPTQINA) the chain is on the cytoplasmic side. The short motif at 78 to 82 (VIMAG) is the VIMAG element.

Belongs to the GLUTAMINE DUMPER 1 (TC 9.B.60) family. As to expression, expressed in the vascular tissues, even in the minor veins of the leaves.

It localises to the membrane. In terms of biological role, probable subunit of an amino acid transporter involved in the regulation of the amino acid metabolism. Stimulates amino acid export by activating nonselective amino acid facilitators. This chain is Protein GLUTAMINE DUMPER 7 (GDU7), found in Arabidopsis thaliana (Mouse-ear cress).